Here is a 494-residue protein sequence, read N- to C-terminus: Anthranilate synthase component 1 (494 aa).

L-tryptophan is bound by residues Ser52 and 274 to 276 (PYM). Chorismate is bound at residue 309-310 (GT). Glu336 lines the Mg(2+) pocket. Chorismate is bound by residues Tyr424, Arg444, 458–460 (GAG), and Gly460. Glu473 is a binding site for Mg(2+).

This sequence belongs to the anthranilate synthase component I family. As to quaternary structure, heterotetramer consisting of two non-identical subunits: a beta subunit (TrpG) and a large alpha subunit (TrpE). Mg(2+) serves as cofactor.

The catalysed reaction is chorismate + L-glutamine = anthranilate + pyruvate + L-glutamate + H(+). It participates in amino-acid biosynthesis; L-tryptophan biosynthesis; L-tryptophan from chorismate: step 1/5. Its activity is regulated as follows. Feedback inhibited by tryptophan. In terms of biological role, part of a heterotetrameric complex that catalyzes the two-step biosynthesis of anthranilate, an intermediate in the biosynthesis of L-tryptophan. In the first step, the glutamine-binding beta subunit (TrpG) of anthranilate synthase (AS) provides the glutamine amidotransferase activity which generates ammonia as a substrate that, along with chorismate, is used in the second step, catalyzed by the large alpha subunit of AS (TrpE) to produce anthranilate. In the absence of TrpG, TrpE can synthesize anthranilate directly from chorismate and high concentrations of ammonia. This is Anthranilate synthase component 1 (trpE) from Aquifex aeolicus (strain VF5).